The chain runs to 91 residues: Small ribosomal subunit protein uS19 (91 aa).

It belongs to the universal ribosomal protein uS19 family.

In terms of biological role, protein S19 forms a complex with S13 that binds strongly to the 16S ribosomal RNA. In Pseudomonas paraeruginosa (strain DSM 24068 / PA7) (Pseudomonas aeruginosa (strain PA7)), this protein is Small ribosomal subunit protein uS19.